The primary structure comprises 175 residues: Large ribosomal subunit protein bL17m (175 aa).

The N-terminal 8 residues, 1–8, are a transit peptide targeting the mitochondrion; sequence MRLSVCAA. Residues 155–175 form a disordered region; sequence DLSQSQEASNHSSHTAQTPGI. The span at 157–175 shows a compositional bias: polar residues; it reads SQSQEASNHSSHTAQTPGI.

This sequence belongs to the bacterial ribosomal protein bL17 family. Component of the mitochondrial ribosome large subunit (39S) which comprises a 16S rRNA and about 50 distinct proteins.

The protein localises to the mitochondrion. This Pongo abelii (Sumatran orangutan) protein is Large ribosomal subunit protein bL17m (MRPL17).